Here is a 130-residue protein sequence, read N- to C-terminus: Small ribosomal subunit protein uS9 (130 aa).

Residues 109 to 130 (RKKERKKYGQRAARARYQYSKR) are disordered.

Belongs to the universal ribosomal protein uS9 family.

This Nitratidesulfovibrio vulgaris (strain DSM 19637 / Miyazaki F) (Desulfovibrio vulgaris) protein is Small ribosomal subunit protein uS9.